The chain runs to 343 residues: Heat-inducible transcription repressor HrcA (343 aa).

This sequence belongs to the HrcA family.

In terms of biological role, negative regulator of class I heat shock genes (grpE-dnaK-dnaJ and groELS operons). Prevents heat-shock induction of these operons. This is Heat-inducible transcription repressor HrcA from Bacillus licheniformis (strain ATCC 14580 / DSM 13 / JCM 2505 / CCUG 7422 / NBRC 12200 / NCIMB 9375 / NCTC 10341 / NRRL NRS-1264 / Gibson 46).